Consider the following 187-residue polypeptide: Dirigent protein 23 (187 aa).

The signal sequence occupies residues 1 to 24 (MAKEEYVSRMLVMLIMIMPLVAQG). A glycan (N-linked (GlcNAc...) asparagine) is linked at asparagine 182.

The protein belongs to the plant dirigent protein family. As to quaternary structure, homodimer.

It localises to the secreted. The protein resides in the extracellular space. Its subcellular location is the apoplast. Dirigent proteins impart stereoselectivity on the phenoxy radical-coupling reaction, yielding optically active lignans from two molecules of coniferyl alcohol in the biosynthesis of lignans, flavonolignans, and alkaloids and thus plays a central role in plant secondary metabolism. This Arabidopsis thaliana (Mouse-ear cress) protein is Dirigent protein 23 (DIR23).